The sequence spans 647 residues: Zinc finger CCCH domain-containing protein 19 (647 aa).

2 C3H1-type zinc fingers span residues 16 to 45 (RRRS…HSDA) and 47 to 73 (RMNP…HPPL). A disordered region spans residues 78 to 106 (GAPTTPRTSQQSAPQVSVPAQAPVPNPAS). The segment covering 86 to 106 (SQQSAPQVSVPAQAPVPNPAS) has biased composition (low complexity). The C3H1-type 3 zinc-finger motif lies at 109-136 (AKQGVPCYYFQKGMCVKGDRCAFLHLPQ). Disordered regions lie at residues 155 to 280 (VPHP…RTNG), 308 to 327 (LSES…DSSD), 335 to 452 (QRRL…DAES), 512 to 580 (LKRK…LSPA), and 586 to 605 (EAAD…ETAE). 2 stretches are compositionally biased toward polar residues: residues 160 to 175 (LKNS…QQNA) and 189 to 203 (NGKT…NRAG). The segment covering 267–280 (SLREDRGAYRRTNG) has biased composition (basic and acidic residues). The span at 347–359 (SDRHNVYPEDERH) shows a compositional bias: basic and acidic residues. The span at 369-379 (QASNDGVSSSR) shows a compositional bias: polar residues. Over residues 419 to 433 (LRGKLHDRLKAKPNE) the composition is skewed to basic and acidic residues. Over residues 435–445 (VSGNVQSSLSK) the composition is skewed to polar residues. The segment covering 527-536 (GSKREEHSGG) has biased composition (basic and acidic residues).

This Oryza sativa subsp. japonica (Rice) protein is Zinc finger CCCH domain-containing protein 19.